The primary structure comprises 483 residues: Glutamyl-tRNA(Gln) amidotransferase subunit A (483 aa).

Residues lysine 77 and serine 152 each act as charge relay system in the active site. The active-site Acyl-ester intermediate is the serine 176.

This sequence belongs to the amidase family. GatA subfamily. Heterotrimer of A, B and C subunits.

The enzyme catalyses L-glutamyl-tRNA(Gln) + L-glutamine + ATP + H2O = L-glutaminyl-tRNA(Gln) + L-glutamate + ADP + phosphate + H(+). In terms of biological role, allows the formation of correctly charged Gln-tRNA(Gln) through the transamidation of misacylated Glu-tRNA(Gln) in organisms which lack glutaminyl-tRNA synthetase. The reaction takes place in the presence of glutamine and ATP through an activated gamma-phospho-Glu-tRNA(Gln). The sequence is that of Glutamyl-tRNA(Gln) amidotransferase subunit A from Shouchella clausii (strain KSM-K16) (Alkalihalobacillus clausii).